Consider the following 210-residue polypeptide: Thymidylate kinase (210 aa).

10-17 lines the ATP pocket; sequence GPEGAGKS.

The protein belongs to the thymidylate kinase family.

The catalysed reaction is dTMP + ATP = dTDP + ADP. In terms of biological role, phosphorylation of dTMP to form dTDP in both de novo and salvage pathways of dTTP synthesis. This chain is Thymidylate kinase, found in Pseudomonas fluorescens (strain Pf0-1).